Here is a 1173-residue protein sequence, read N- to C-terminus: Pleckstrin homology domain-containing family A member 6 (1173 aa).

Positions 1-22 (MSNKTGGKRSATINSDIANHNM) are enriched in polar residues. Residues 1-39 (MSNKTGGKRSATINSDIANHNMVSEVPPERPNIRATRTS) form a disordered region. Residues 59–158 (PVTKAGWLYK…WIQAMGEAAR (100 aa)) form the PH domain. The interval 163–346 (PAQKSVPQPV…PSRFYPMPRR (184 aa)) is disordered. The span at 201–233 (LEPEAKTRGEGDGRGCEKAERRPERPEVKKETL) shows a compositional bias: basic and acidic residues. Residues serine 247 and serine 251 each carry the phosphoserine modification. Polar residues-rich tracts occupy residues 270–281 (NGWQYSSPSRPG) and 311–322 (RKSSMNQLQQWV). Phosphoserine occurs at positions 314, 459, 461, and 472. Phosphotyrosine is present on tyrosine 492. Serine 665 bears the Phosphoserine mark. 2 disordered regions span residues 737-872 (RKNN…PRDI) and 888-984 (ALNK…RPAY). Low complexity-rich tracts occupy residues 761 to 782 (SSNSPASPLSSASLTSPLSPFS) and 789 to 799 (GSPTKPGSSEE). Residues 815–824 (ESPPTVPPLP) are compositionally biased toward pro residues. Serine 864 is modified (phosphoserine). Position 868 is a phosphothreonine (threonine 868). Serine 901 is modified (phosphoserine). The residue at position 908 (threonine 908) is a Phosphothreonine. The segment covering 915–926 (RTTNGLTNGLSS) has biased composition (polar residues). Residue serine 925 is modified to Phosphoserine. The span at 940 to 952 (GKVKMSVEEQMDR) shows a compositional bias: basic and acidic residues. Over residues 953-967 (MRRHQSGSMKEKRRS) the composition is skewed to basic residues. Phosphoserine occurs at positions 973, 979, and 992. Residue threonine 1045 is modified to Phosphothreonine. Residue serine 1065 is modified to Phosphoserine. Disordered regions lie at residues 1093–1114 (PIGEGDSVDVPQDSESQLQEQE) and 1130–1173 (RGRM…TMRV). Threonine 1140 carries the phosphothreonine modification. Positions 1141–1155 (PSPPTSPASPTPPVN) are enriched in pro residues. Residue serine 1142 is modified to Phosphoserine. Threonine 1145 is modified (phosphothreonine). Phosphoserine occurs at positions 1146 and 1149. Threonine 1151 bears the Phosphothreonine mark.

In Mus musculus (Mouse), this protein is Pleckstrin homology domain-containing family A member 6 (Plekha6).